The following is a 103-amino-acid chain: N(4)-acetylcytidine amidohydrolase (103 aa).

The region spanning 6 to 92 (TFFERFEPGI…VIQEIYPGLE (87 aa)) is the ASCH domain. The Proton acceptor role is filled by Lys20. The active-site Nucleophile is Thr23. Glu73 (proton donor) is an active-site residue.

It belongs to the N(4)-acetylcytidine amidohydrolase family.

It carries out the reaction N(4)-acetylcytidine + H2O = cytidine + acetate + H(+). It catalyses the reaction N(4)-acetyl-2'-deoxycytidine + H2O = 2'-deoxycytidine + acetate + H(+). The enzyme catalyses N(4)-acetylcytosine + H2O = cytosine + acetate + H(+). Functionally, catalyzes the hydrolysis of N(4)-acetylcytidine (ac4C). This Shewanella sp. (strain MR-7) protein is N(4)-acetylcytidine amidohydrolase.